The sequence spans 61 residues: Large ribosomal subunit protein uL30 (61 aa).

The protein belongs to the universal ribosomal protein uL30 family. As to quaternary structure, part of the 50S ribosomal subunit.

The protein is Large ribosomal subunit protein uL30 of Nitrosomonas europaea (strain ATCC 19718 / CIP 103999 / KCTC 2705 / NBRC 14298).